The following is a 420-amino-acid chain: MKTLIARHKAGEHIGICSVCSAHPLVIEAALAFDRNSTRKVLIEATSNQVNQFGGYTGMTPADFREFVFTIADKVGFARERIILGGDHLGPNCWQQENADAAMEKSVELVKEYVRAGFSKIHLDASMSCAGDPIPLAPETVAERAAVLCFAAESVATDCQREQLSYVIGTEVPVPGGEASAIQSVHITHVEDAANTLRTHQKAFIARGLTEALTRVIAIVVQPGVEFDHSNIIHYQPQEAQPLAQWIENTRMVYEAHSTDYQTRTAYWELVRDHFAILKVGPALTFALREAIFALAQIEQELIAPENRSGCLAVIEEVMLDEPQYWKKYYRTGFNDSLLDIRYSLSDRIRYYWPHSRIKNSVDTMMVNLEGVDIPLGMISQYLPKQFERIQSGELSAIPHQLIMDKIYDVLRAYRYGCAE.

The protein belongs to the GatZ/KbaZ family. GatZ subfamily. Forms a complex with GatY.

It participates in carbohydrate metabolism; D-tagatose 6-phosphate degradation; D-glyceraldehyde 3-phosphate and glycerone phosphate from D-tagatose 6-phosphate: step 2/2. Its function is as follows. Component of the tagatose-1,6-bisphosphate aldolase GatYZ that is required for full activity and stability of the Y subunit. Could have a chaperone-like function for the proper and stable folding of GatY. When expressed alone, GatZ does not show any aldolase activity. Is involved in the catabolism of galactitol. This is D-tagatose-1,6-bisphosphate aldolase subunit GatZ from Escherichia coli O9:H4 (strain HS).